Reading from the N-terminus, the 133-residue chain is Thioredoxin-like protein CXXS1 (133 aa).

Residues 1–120 (MEIQQQKGVG…VKKMVDASAE (120 aa)) enclose the Thioredoxin domain.

This sequence belongs to the thioredoxin family.

This Oryza sativa subsp. japonica (Rice) protein is Thioredoxin-like protein CXXS1.